We begin with the raw amino-acid sequence, 473 residues long: Argininosuccinate lyase (473 aa).

This sequence belongs to the lyase 1 family. Argininosuccinate lyase subfamily.

Its subcellular location is the cytoplasm. The enzyme catalyses 2-(N(omega)-L-arginino)succinate = fumarate + L-arginine. It functions in the pathway amino-acid biosynthesis; L-arginine biosynthesis; L-arginine from L-ornithine and carbamoyl phosphate: step 3/3. This Bordetella pertussis (strain Tohama I / ATCC BAA-589 / NCTC 13251) protein is Argininosuccinate lyase.